Consider the following 262-residue polypeptide: ATP synthase subunit a (262 aa).

Transmembrane regions (helical) follow at residues 30-50, 64-84, 91-111, 123-143, 149-169, 195-215, and 220-240; these read ITSL…LTIF, WNIV…DQIG, LIYF…NILG, ISVT…IGFS, FFSL…LVLI, LFGV…SLLL, and ITLP…VALL.

This sequence belongs to the ATPase A chain family. As to quaternary structure, F-type ATPases have 2 components, CF(1) - the catalytic core - and CF(0) - the membrane proton channel. CF(1) has five subunits: alpha(3), beta(3), gamma(1), delta(1), epsilon(1). CF(0) has three main subunits: a, b and c.

The protein resides in the mitochondrion inner membrane. In terms of biological role, mitochondrial membrane ATP synthase (F(1)F(0) ATP synthase or Complex V) produces ATP from ADP in the presence of a proton gradient across the membrane which is generated by electron transport complexes of the respiratory chain. F-type ATPases consist of two structural domains, F(1) - containing the extramembraneous catalytic core and F(0) - containing the membrane proton channel, linked together by a central stalk and a peripheral stalk. During catalysis, ATP synthesis in the catalytic domain of F(1) is coupled via a rotary mechanism of the central stalk subunits to proton translocation. Key component of the proton channel; it may play a direct role in the translocation of protons across the membrane. In Allomyces macrogynus, this protein is ATP synthase subunit a (ATP6).